Here is a 23-residue protein sequence, read N- to C-terminus: Paralytic peptide 2 (23 aa).

Cysteines 7 and 19 form a disulfide.

It belongs to the GBP/PSP1/paralytic peptide family. In terms of tissue distribution, hemolymph.

In terms of biological role, causes rapid, rigid paralysis when injected into Lepidopteran larvae. The physiological role may be to reduce hemolymph loss following injury and promote wound healing. In Spodoptera exigua (Beet armyworm), this protein is Paralytic peptide 2.